The following is a 379-amino-acid chain: Cathepsin B-like protease 1 (379 aa).

An N-terminal signal peptide occupies residues 1–30 (MADSCCIRLHLLASVFLLLFSSFNLQGIAA). Positions 31-102 (ENLSKQKLTS…PIVRHDLSLK (72 aa)) are cleaved as a propeptide — activation peptide. N-linked (GlcNAc...) asparagine glycosylation is found at Asn32 and Asn69. 6 disulfides stabilise this stretch: Cys116–Cys165, Cys148–Cys191, Cys182–Cys236, Cys183–Cys187, Cys213–Cys240, and Cys222–Cys227. Residue Cys151 is part of the active site. An N-linked (GlcNAc...) asparagine glycan is attached at Asn171. Residues His306 and Asn327 contribute to the active site. The N-linked (GlcNAc...) asparagine glycan is linked to Asn330. A propeptide spans 363-379 (NVFKGITTSDDLLVSSV) (removed in mature form).

This sequence belongs to the peptidase C1 family.

Thiol protease that plays a central role in plant programmed cell death (PCD). In addition to its role in protein degradation, may cleave and/or degrade a number of target proteins, activating signaling towards PCD. Contributes to the increase of caspase-3-like activity after UV-C-induced PCD and is required for abiotic stress-induced PCD. Functions redundantly with CATHB2 and CATHB3 in basal defense and distinct forms of plant programmed cell death (PCD). Participates in the establishment of basal resistance against the bacterial pathogen Pseudomonase syringae pv. tomato DC3000. Required for full levels of PCD during resistance (R) gene-mediated hypersensitive response (HR). Involved in the regulation of senescence, a developmental form of PCD in plants. This chain is Cathepsin B-like protease 1, found in Arabidopsis thaliana (Mouse-ear cress).